A 338-amino-acid polypeptide reads, in one-letter code: Flap endonuclease 1 (338 aa).

The tract at residues 1–98 is N-domain; sequence MGTDIGDLLQ…ETLNRRKEVR (98 aa). Mg(2+) contacts are provided by Asp-27, Asp-80, Glu-152, Glu-154, Asp-173, Asp-175, and Asp-236. The tract at residues 116 to 257 is I-domain; it reads AAYKYAQASS…TALKLIKKHG (142 aa). The interaction with PCNA stretch occupies residues 330–338; it reads RQQTLDQWF.

Belongs to the XPG/RAD2 endonuclease family. FEN1 subfamily. In terms of assembly, interacts with PCNA. PCNA stimulates the nuclease activity without altering cleavage specificity. It depends on Mg(2+) as a cofactor.

Its function is as follows. Structure-specific nuclease with 5'-flap endonuclease and 5'-3' exonuclease activities involved in DNA replication and repair. During DNA replication, cleaves the 5'-overhanging flap structure that is generated by displacement synthesis when DNA polymerase encounters the 5'-end of a downstream Okazaki fragment. Binds the unpaired 3'-DNA end and kinks the DNA to facilitate 5' cleavage specificity. Cleaves one nucleotide into the double-stranded DNA from the junction in flap DNA, leaving a nick for ligation. Also involved in the base excision repair (BER) pathway. Acts as a genome stabilization factor that prevents flaps from equilibrating into structures that lead to duplications and deletions. Also possesses 5'-3' exonuclease activity on nicked or gapped double-stranded DNA. The chain is Flap endonuclease 1 from Methanosarcina barkeri (strain Fusaro / DSM 804).